The sequence spans 568 residues: 2-succinyl-5-enolpyruvyl-6-hydroxy-3-cyclohexene-1-carboxylate synthase (568 aa).

It belongs to the TPP enzyme family. MenD subfamily. In terms of assembly, homodimer. Requires Mg(2+) as cofactor. The cofactor is Mn(2+). It depends on thiamine diphosphate as a cofactor.

It catalyses the reaction isochorismate + 2-oxoglutarate + H(+) = 5-enolpyruvoyl-6-hydroxy-2-succinyl-cyclohex-3-ene-1-carboxylate + CO2. The protein operates within quinol/quinone metabolism; 1,4-dihydroxy-2-naphthoate biosynthesis; 1,4-dihydroxy-2-naphthoate from chorismate: step 2/7. It functions in the pathway quinol/quinone metabolism; menaquinone biosynthesis. In terms of biological role, catalyzes the thiamine diphosphate-dependent decarboxylation of 2-oxoglutarate and the subsequent addition of the resulting succinic semialdehyde-thiamine pyrophosphate anion to isochorismate to yield 2-succinyl-5-enolpyruvyl-6-hydroxy-3-cyclohexene-1-carboxylate (SEPHCHC). This Haemophilus influenzae (strain ATCC 51907 / DSM 11121 / KW20 / Rd) protein is 2-succinyl-5-enolpyruvyl-6-hydroxy-3-cyclohexene-1-carboxylate synthase.